A 206-amino-acid polypeptide reads, in one-letter code: Cytochrome c oxidase subunit 3 (206 aa).

The next 5 membrane-spanning stretches (helical) occupy residues 26-46 (FLGF…FFGT), 68-88 (LVFI…LAMF), 97-117 (AMMI…GFEI), 143-163 (LVGL…VLLI), and 185-205 (WHFI…MGVG).

It belongs to the cytochrome c oxidase subunit 3 family.

The protein localises to the cell membrane. The enzyme catalyses 4 Fe(II)-[cytochrome c] + O2 + 8 H(+)(in) = 4 Fe(III)-[cytochrome c] + 2 H2O + 4 H(+)(out). The chain is Cytochrome c oxidase subunit 3 (ctaE) from Alkalihalophilus pseudofirmus (strain ATCC BAA-2126 / JCM 17055 / OF4) (Bacillus pseudofirmus).